The following is a 104-amino-acid chain: Large ribosomal subunit protein uL23 (104 aa).

Belongs to the universal ribosomal protein uL23 family. Part of the 50S ribosomal subunit. Contacts protein L29, and trigger factor when it is bound to the ribosome.

Its function is as follows. One of the early assembly proteins it binds 23S rRNA. One of the proteins that surrounds the polypeptide exit tunnel on the outside of the ribosome. Forms the main docking site for trigger factor binding to the ribosome. The protein is Large ribosomal subunit protein uL23 of Burkholderia multivorans (strain ATCC 17616 / 249).